Consider the following 1075-residue polypeptide: DNA-directed RNA polymerase subunit beta (1075 aa).

It belongs to the RNA polymerase beta chain family. In terms of assembly, in plastids the minimal PEP RNA polymerase catalytic core is composed of four subunits: alpha, beta, beta', and beta''. When a (nuclear-encoded) sigma factor is associated with the core the holoenzyme is formed, which can initiate transcription.

It is found in the plastid. It localises to the chloroplast. It catalyses the reaction RNA(n) + a ribonucleoside 5'-triphosphate = RNA(n+1) + diphosphate. Functionally, DNA-dependent RNA polymerase catalyzes the transcription of DNA into RNA using the four ribonucleoside triphosphates as substrates. This is DNA-directed RNA polymerase subunit beta from Saccharum officinarum (Sugarcane).